A 202-amino-acid polypeptide reads, in one-letter code: Probable chemoreceptor glutamine deamidase CheD 2 (202 aa).

Belongs to the CheD family.

The catalysed reaction is L-glutaminyl-[protein] + H2O = L-glutamyl-[protein] + NH4(+). Functionally, probably deamidates glutamine residues to glutamate on methyl-accepting chemotaxis receptors (MCPs), playing an important role in chemotaxis. This is Probable chemoreceptor glutamine deamidase CheD 2 from Shewanella oneidensis (strain ATCC 700550 / JCM 31522 / CIP 106686 / LMG 19005 / NCIMB 14063 / MR-1).